Reading from the N-terminus, the 261-residue chain is tRNA pseudouridine synthase A (261 aa).

Asp51 functions as the Nucleophile in the catalytic mechanism. Tyr109 contacts substrate.

This sequence belongs to the tRNA pseudouridine synthase TruA family. As to quaternary structure, homodimer.

The enzyme catalyses uridine(38/39/40) in tRNA = pseudouridine(38/39/40) in tRNA. Formation of pseudouridine at positions 38, 39 and 40 in the anticodon stem and loop of transfer RNAs. This chain is tRNA pseudouridine synthase A, found in Shewanella denitrificans (strain OS217 / ATCC BAA-1090 / DSM 15013).